A 132-amino-acid polypeptide reads, in one-letter code: Ribonuclease VapC (132 aa).

A PINc domain is found at Y4–V123. The Mg(2+) site is built by D7 and D98.

It belongs to the PINc/VapC protein family. Probably forms a complex with cognate antitoxin VapB2. Mg(2+) is required as a cofactor.

Functionally, toxic component of a type II toxin-antitoxin (TA) system. Acts as an RNase. Its toxic effect is neutralized by cognate antitoxin VapB2 but not by non-cognate antitoxin VapB1. This Haemophilus influenzae (strain 86-028NP) protein is Ribonuclease VapC.